The chain runs to 175 residues: Methylated-DNA--protein-cysteine methyltransferase (175 aa).

Catalysis depends on cysteine 142, which acts as the Nucleophile; methyl group acceptor.

It belongs to the MGMT family.

It localises to the cytoplasm. It carries out the reaction a 6-O-methyl-2'-deoxyguanosine in DNA + L-cysteinyl-[protein] = S-methyl-L-cysteinyl-[protein] + a 2'-deoxyguanosine in DNA. It catalyses the reaction a 4-O-methyl-thymidine in DNA + L-cysteinyl-[protein] = a thymidine in DNA + S-methyl-L-cysteinyl-[protein]. Its function is as follows. Involved in the cellular defense against the biological effects of O6-methylguanine (O6-MeG) and O4-methylthymine (O4-MeT) in DNA. Repairs the methylated nucleobase in DNA by stoichiometrically transferring the methyl group to a cysteine residue in the enzyme. This is a suicide reaction: the enzyme is irreversibly inactivated. The sequence is that of Methylated-DNA--protein-cysteine methyltransferase from Thermococcus barophilus (strain DSM 11836 / MP).